A 295-amino-acid polypeptide reads, in one-letter code: 2-dehydropantoate 2-reductase (295 aa).

Residues 9–14 (GPGAVG), Asn100, and Ala126 each bind NADP(+). Asn100 contacts substrate. The active-site Proton donor is Lys177. Substrate contacts are provided by Asn181 and Ser246. Residue Glu258 coordinates NADP(+).

The protein belongs to the ketopantoate reductase family.

The protein resides in the cytoplasm. It carries out the reaction (R)-pantoate + NADP(+) = 2-dehydropantoate + NADPH + H(+). It functions in the pathway cofactor biosynthesis; (R)-pantothenate biosynthesis; (R)-pantoate from 3-methyl-2-oxobutanoate: step 2/2. Functionally, catalyzes the NADPH-dependent reduction of ketopantoate into pantoic acid. This chain is 2-dehydropantoate 2-reductase, found in Mycobacterium tuberculosis (strain CDC 1551 / Oshkosh).